We begin with the raw amino-acid sequence, 726 residues long: Dipeptidyl-peptidase 5 (726 aa).

The signal sequence occupies residues 1–19 (MAAAKWLIASLAFASSGLA). Residues Asn96 and Asn252 are each glycosylated (N-linked (GlcNAc...) asparagine). The disordered stretch occupies residues 269 to 291 (AEPINKRNGPRTPQGIEGASSSP). Catalysis depends on Ser558, which acts as the Charge relay system. 2 N-linked (GlcNAc...) asparagine glycosylation sites follow: Asn605 and Asn638. Catalysis depends on charge relay system residues Asp641 and His673. Asn699 is a glycosylation site (N-linked (GlcNAc...) asparagine).

It belongs to the peptidase S9C family.

Its subcellular location is the secreted. The sequence is that of Dipeptidyl-peptidase 5 (DPPV) from Trichophyton schoenleinii.